Consider the following 41-residue polypeptide: Large ribosomal subunit protein bL36 (41 aa).

The protein belongs to the bacterial ribosomal protein bL36 family.

In Rhizobium etli (strain CIAT 652), this protein is Large ribosomal subunit protein bL36.